A 244-amino-acid chain; its full sequence is Small ribosomal subunit protein uS3 (244 aa).

The KH type-2 domain maps to 39–107; that stretch reads VREMLRKKLA…PAHINVTEVR (69 aa). The interval 213–244 is disordered; that stretch reads VGQEKQDDSPRNDRNDRGDRGDRPSRPAREAR. Positions 216–244 are enriched in basic and acidic residues; sequence EKQDDSPRNDRNDRGDRGDRPSRPAREAR.

It belongs to the universal ribosomal protein uS3 family. In terms of assembly, part of the 30S ribosomal subunit. Forms a tight complex with proteins S10 and S14.

Functionally, binds the lower part of the 30S subunit head. Binds mRNA in the 70S ribosome, positioning it for translation. This chain is Small ribosomal subunit protein uS3, found in Xanthomonas euvesicatoria pv. vesicatoria (strain 85-10) (Xanthomonas campestris pv. vesicatoria).